Reading from the N-terminus, the 339-residue chain is Ketol-acid reductoisomerase (NADP(+)) (339 aa).

Positions 1-182 (MRVYYDRDAD…GGGRAGIIET (182 aa)) constitute a KARI N-terminal Rossmann domain. Residues 24–27 (YGSQ), Arg-48, Ser-51, Ser-53, and 83–86 (DELQ) each bind NADP(+). His-108 is a catalytic residue. Gly-134 serves as a coordination point for NADP(+). Positions 183–328 (TFREECETDL…AKLRDMMPWI (146 aa)) constitute a KARI C-terminal knotted domain. Mg(2+)-binding residues include Asp-191, Glu-195, Glu-227, and Glu-231. Ser-252 contacts substrate.

It belongs to the ketol-acid reductoisomerase family. It depends on Mg(2+) as a cofactor.

It carries out the reaction (2R)-2,3-dihydroxy-3-methylbutanoate + NADP(+) = (2S)-2-acetolactate + NADPH + H(+). The enzyme catalyses (2R,3R)-2,3-dihydroxy-3-methylpentanoate + NADP(+) = (S)-2-ethyl-2-hydroxy-3-oxobutanoate + NADPH + H(+). It participates in amino-acid biosynthesis; L-isoleucine biosynthesis; L-isoleucine from 2-oxobutanoate: step 2/4. The protein operates within amino-acid biosynthesis; L-valine biosynthesis; L-valine from pyruvate: step 2/4. Its function is as follows. Involved in the biosynthesis of branched-chain amino acids (BCAA). Catalyzes an alkyl-migration followed by a ketol-acid reduction of (S)-2-acetolactate (S2AL) to yield (R)-2,3-dihydroxy-isovalerate. In the isomerase reaction, S2AL is rearranged via a Mg-dependent methyl migration to produce 3-hydroxy-3-methyl-2-ketobutyrate (HMKB). In the reductase reaction, this 2-ketoacid undergoes a metal-dependent reduction by NADPH to yield (R)-2,3-dihydroxy-isovalerate. This is Ketol-acid reductoisomerase (NADP(+)) from Rhodopseudomonas palustris (strain ATCC BAA-98 / CGA009).